The sequence spans 246 residues: 2,5-diamino-6-ribosylamino-4(3H)-pyrimidinone 5'-phosphate reductase (246 aa).

NADP(+)-binding positions include Thr78, Asp82, Leu163, and 186–190; that span reads GAEVL.

This sequence belongs to the HTP reductase family. As to quaternary structure, homodimer.

It carries out the reaction 2,5-diamino-6-(1-D-ribitylamino)pyrimidin-4(3H)-one 5'-phosphate + NADP(+) = 2,5-diamino-6-(1-D-ribosylamino)pyrimidin-4(3H)-one 5'-phosphate + NADPH + H(+). It catalyses the reaction 2,5-diamino-6-(1-D-ribitylamino)pyrimidin-4(3H)-one 5'-phosphate + NAD(+) = 2,5-diamino-6-(1-D-ribosylamino)pyrimidin-4(3H)-one 5'-phosphate + NADH + H(+). It functions in the pathway cofactor biosynthesis; riboflavin biosynthesis. Its function is as follows. Catalyzes an early step in riboflavin biosynthesis, the NADPH-dependent reduction of the ribose side chain of 2,5-diamino-6-ribosylamino-4(3H)-pyrimidinone 5'-phosphate, yielding 2,5-diamino-6-ribitylamino-4(3H)-pyrimidinone 5'-phosphate. In Eremothecium gossypii (strain ATCC 10895 / CBS 109.51 / FGSC 9923 / NRRL Y-1056) (Yeast), this protein is 2,5-diamino-6-ribosylamino-4(3H)-pyrimidinone 5'-phosphate reductase (RIB7).